A 369-amino-acid chain; its full sequence is 4-hydroxy-3-methylbut-2-en-1-yl diphosphate synthase (flavodoxin) (369 aa).

Residues Cys270, Cys273, Cys305, and Glu312 each coordinate [4Fe-4S] cluster.

The protein belongs to the IspG family. It depends on [4Fe-4S] cluster as a cofactor.

The enzyme catalyses (2E)-4-hydroxy-3-methylbut-2-enyl diphosphate + oxidized [flavodoxin] + H2O + 2 H(+) = 2-C-methyl-D-erythritol 2,4-cyclic diphosphate + reduced [flavodoxin]. The protein operates within isoprenoid biosynthesis; isopentenyl diphosphate biosynthesis via DXP pathway; isopentenyl diphosphate from 1-deoxy-D-xylulose 5-phosphate: step 5/6. Converts 2C-methyl-D-erythritol 2,4-cyclodiphosphate (ME-2,4cPP) into 1-hydroxy-2-methyl-2-(E)-butenyl 4-diphosphate. In Pseudomonas fluorescens (strain ATCC BAA-477 / NRRL B-23932 / Pf-5), this protein is 4-hydroxy-3-methylbut-2-en-1-yl diphosphate synthase (flavodoxin).